A 229-amino-acid polypeptide reads, in one-letter code: UPF0758 protein Caur_3603 (229 aa).

The region spanning 105–227 is the MPN domain; the sequence is PIRSPADVAT…YVSLRERGLG (123 aa). Zn(2+) is bound by residues His-176, His-178, and Asp-189. The JAMM motif motif lies at 176-189; sequence HNHPSGEPTPSMED.

The protein belongs to the UPF0758 family.

This Chloroflexus aurantiacus (strain ATCC 29366 / DSM 635 / J-10-fl) protein is UPF0758 protein Caur_3603.